We begin with the raw amino-acid sequence, 131 residues long: Bacteriohemerythrin (131 aa).

The Fe cation site is built by H22, H58, E62, H77, H81, H117, and D122.

The protein belongs to the hemerythrin family. As to quaternary structure, monomer.

In terms of biological role, oxygen-binding protein. May be involved in a storage mechanism or for delivery to oxygen-requiring enzymes. The oxygen-binding site contains two iron atoms. The polypeptide is Bacteriohemerythrin (Methylococcus capsulatus (strain ATCC 33009 / NCIMB 11132 / Bath)).